The sequence spans 1342 residues: DNA-directed RNA polymerase subunit beta (1342 aa).

Belongs to the RNA polymerase beta chain family. The RNAP catalytic core consists of 2 alpha, 1 beta, 1 beta' and 1 omega subunit. When a sigma factor is associated with the core the holoenzyme is formed, which can initiate transcription.

The catalysed reaction is RNA(n) + a ribonucleoside 5'-triphosphate = RNA(n+1) + diphosphate. Its function is as follows. DNA-dependent RNA polymerase catalyzes the transcription of DNA into RNA using the four ribonucleoside triphosphates as substrates. This is DNA-directed RNA polymerase subunit beta from Salmonella agona (strain SL483).